Consider the following 621-residue polypeptide: Bifunctional 3'-phosphoadenosine 5'-phosphosulfate synthase 2 (621 aa).

Residues 1-216 form an adenylyl-sulfate kinase region; that stretch reads MSANFKMNHK…VVELLQEQNI (216 aa). 53–58 lines the ATP pocket; that stretch reads GAGKTT. Adenosine 5'-phosphosulfate contacts are provided by residues 80 to 83, phenylalanine 92, 97 to 100, 123 to 124, lysine 162, and 175 to 176; these read DNVR, REEN, IS, and GF. Residues serine 198, 415 to 418, 517 to 521, and alanine 559 each bind ATP; these read QLRN and GRDPA. Residues 225–621 form a sulfate adenylyltransferase region; the sequence is IHELFVPENK…DYYRSLEKTN (397 aa).

This sequence in the N-terminal section; belongs to the APS kinase family. It in the C-terminal section; belongs to the sulfate adenylyltransferase family. As to expression, expressed in liver, cartilage, skin and brain.

It carries out the reaction sulfate + ATP + H(+) = adenosine 5'-phosphosulfate + diphosphate. The enzyme catalyses adenosine 5'-phosphosulfate + ATP = 3'-phosphoadenylyl sulfate + ADP + H(+). It functions in the pathway sulfur metabolism; sulfate assimilation. Functionally, bifunctional enzyme with both ATP sulfurylase and APS kinase activity, which mediates two steps in the sulfate activation pathway. The first step is the transfer of a sulfate group to ATP to yield adenosine 5'-phosphosulfate (APS), and the second step is the transfer of a phosphate group from ATP to APS yielding 3'-phosphoadenylylsulfate/PAPS, the activated sulfate donor used by sulfotransferases. In mammals, PAPS is the sole source of sulfate while APS appears to only be an intermediate in the sulfate-activation pathway. May have an important role in skeletogenesis during postnatal growth. This is Bifunctional 3'-phosphoadenosine 5'-phosphosulfate synthase 2 (Papss2) from Mus musculus (Mouse).